Consider the following 454-residue polypeptide: Probable 1,4-beta-D-glucan cellobiohydrolase C (454 aa).

A signal peptide spans methionine 1–alanine 19. A CBM1 domain is found at glutamine 20–isoleucine 55. 2 cysteine pairs are disulfide-bonded: cysteine 27-cysteine 44 and cysteine 38-cysteine 54. Thr-rich linker stretches follow at residues threonine 59–threonine 94 and alanine 95–phenylalanine 454. The tract at residues threonine 68–alanine 95 is disordered. Aspartate 184 is an active-site residue. Intrachain disulfides connect cysteine 185/cysteine 244 and cysteine 376/cysteine 423. Aspartate 230 functions as the Proton donor in the catalytic mechanism. Residue aspartate 409 is the Nucleophile of the active site. N-linked (GlcNAc...) asparagine glycosylation is present at asparagine 413.

The protein belongs to the glycosyl hydrolase 6 (cellulase B) family.

It is found in the secreted. The enzyme catalyses Hydrolysis of (1-&gt;4)-beta-D-glucosidic linkages in cellulose and cellotetraose, releasing cellobiose from the non-reducing ends of the chains.. Its function is as follows. The biological conversion of cellulose to glucose generally requires three types of hydrolytic enzymes: (1) Endoglucanases which cut internal beta-1,4-glucosidic bonds; (2) Exocellobiohydrolases that cut the disaccharide cellobiose from the non-reducing end of the cellulose polymer chain; (3) Beta-1,4-glucosidases which hydrolyze the cellobiose and other short cello-oligosaccharides to glucose. The sequence is that of Probable 1,4-beta-D-glucan cellobiohydrolase C (cbhC) from Aspergillus fumigatus (strain CBS 144.89 / FGSC A1163 / CEA10) (Neosartorya fumigata).